Reading from the N-terminus, the 88-residue chain is MGGISIWQLLIIAVIVVLLFGTNKLRTLGSDLGASVKGFKKAMGDENQKETNNAEKTTNDADFDTKNLAQKTSTEEKSTTESKNKEQV.

A helical transmembrane segment spans residues 1–21; that stretch reads MGGISIWQLLIIAVIVVLLFG. Residues 41–88 are disordered; the sequence is KAMGDENQKETNNAEKTTNDADFDTKNLAQKTSTEEKSTTESKNKEQV. Composition is skewed to basic and acidic residues over residues 42 to 65 and 73 to 88; these read AMGD…DFDT and STEE…KEQV.

It belongs to the TatA/E family. In terms of assembly, the Tat system comprises two distinct complexes: a TatABC complex, containing multiple copies of TatA, TatB and TatC subunits, and a separate TatA complex, containing only TatA subunits. Substrates initially bind to the TatABC complex, which probably triggers association of the separate TatA complex to form the active translocon.

It localises to the cell inner membrane. Functionally, part of the twin-arginine translocation (Tat) system that transports large folded proteins containing a characteristic twin-arginine motif in their signal peptide across membranes. TatA could form the protein-conducting channel of the Tat system. The sequence is that of Sec-independent protein translocase protein TatA from Proteus mirabilis (strain HI4320).